The primary structure comprises 369 residues: DNA replication and repair protein RecF (369 aa).

Residue 30-37 coordinates ATP; that stretch reads GENAQGKT.

The protein belongs to the RecF family.

The protein resides in the cytoplasm. In terms of biological role, the RecF protein is involved in DNA metabolism; it is required for DNA replication and normal SOS inducibility. RecF binds preferentially to single-stranded, linear DNA. It also seems to bind ATP. The protein is DNA replication and repair protein RecF of Oceanobacillus iheyensis (strain DSM 14371 / CIP 107618 / JCM 11309 / KCTC 3954 / HTE831).